A 305-amino-acid polypeptide reads, in one-letter code: DNA-directed RNA polymerase 35 kDa subunit (305 aa).

It belongs to the poxviridae DNA-directed RNA polymerase 35 kDa subunit family. The DNA-dependent RNA polymerase used for intermediate and late genes expression consists of eight subunits 147 kDa, 133 kDa, 35 kDa, 30 kDa, 22 kDa, 19 kDa, 18 kDa and 7 kDa totalling more than 500 kDa in mass. The same holoenzyme, with the addition of the transcription-specificity factor RAP94, is used for early gene expression.

It is found in the virion. It catalyses the reaction RNA(n) + a ribonucleoside 5'-triphosphate = RNA(n+1) + diphosphate. In terms of biological role, part of the DNA-dependent RNA polymerase which catalyzes the transcription of viral DNA into RNA using the four ribonucleoside triphosphates as substrates. Responsible for the transcription of early, intermediate and late genes. DNA-dependent RNA polymerase associates with the early transcription factor (ETF), itself composed of D6 and A7, thereby allowing the early genes transcription. Late transcription, and probably also intermediate transcription, require newly synthesized RNA polymerase. The chain is DNA-directed RNA polymerase 35 kDa subunit (OPG156) from Variola virus (isolate Human/India/Ind3/1967) (VARV).